Here is a 165-residue protein sequence, read N- to C-terminus: MTIHIEKETEVNFDFNEEVLIKEVIEAALDYEECPYETEINVVLTNNEEIKEINKEYREIDAPTDVLSFPMVEFNEPSDFEHVEEEQEDCFHPDSGELMLGDIIVSVDKVFSQAKEFGHSEKRELGFLIAHSMLHLCGYDHMEEEEREVMEERQRAILDRIHLSR.

The Zn(2+) site is built by His131, His135, and His141.

The protein belongs to the endoribonuclease YbeY family. The cofactor is Zn(2+).

Its subcellular location is the cytoplasm. In terms of biological role, single strand-specific metallo-endoribonuclease involved in late-stage 70S ribosome quality control and in maturation of the 3' terminus of the 16S rRNA. The protein is Endoribonuclease YbeY of Lachnoclostridium phytofermentans (strain ATCC 700394 / DSM 18823 / ISDg) (Clostridium phytofermentans).